Consider the following 508-residue polypeptide: Photosystem II CP47 reaction center protein (508 aa).

A run of 6 helical transmembrane segments spans residues 21–36, 101–115, 140–156, 203–218, 237–252, and 457–472; these read AVHL…WAGS, IILS…IWHW, GIHL…FGAF, IAAG…FHLS, VLSS…AFVV, and NFAL…HGSR.

The protein belongs to the PsbB/PsbC family. PsbB subfamily. As to quaternary structure, PSII is composed of 1 copy each of membrane proteins PsbA, PsbB, PsbC, PsbD, PsbE, PsbF, PsbH, PsbI, PsbJ, PsbK, PsbL, PsbM, PsbT, PsbX, PsbY, PsbZ, Psb30/Ycf12, at least 3 peripheral proteins of the oxygen-evolving complex and a large number of cofactors. It forms dimeric complexes. It depends on Binds multiple chlorophylls. PSII binds additional chlorophylls, carotenoids and specific lipids. as a cofactor.

It is found in the plastid. Its subcellular location is the chloroplast thylakoid membrane. Functionally, one of the components of the core complex of photosystem II (PSII). It binds chlorophyll and helps catalyze the primary light-induced photochemical processes of PSII. PSII is a light-driven water:plastoquinone oxidoreductase, using light energy to abstract electrons from H(2)O, generating O(2) and a proton gradient subsequently used for ATP formation. The chain is Photosystem II CP47 reaction center protein from Staurastrum punctulatum (Green alga).